Here is a 103-residue protein sequence, read N- to C-terminus: Small ribosomal subunit protein uS10 (103 aa).

The protein belongs to the universal ribosomal protein uS10 family. Part of the 30S ribosomal subunit.

Its function is as follows. Involved in the binding of tRNA to the ribosomes. The chain is Small ribosomal subunit protein uS10 from Xylella fastidiosa (strain M12).